Reading from the N-terminus, the 171-residue chain is Zinc uptake regulation protein (171 aa).

Belongs to the Fur family.

Functionally, acts as a negative controlling element, employing Zn(2+) as a cofactor to bind the operator of the repressed genes (znuACB). The sequence is that of Zinc uptake regulation protein (zur) from Escherichia coli (strain K12).